The chain runs to 406 residues: Probable sodium/metabolite cotransporter BASS1, chloroplastic (406 aa).

The transit peptide at 1–64 (MPLLRRPPAA…RHLCGIPSSR (64 aa)) directs the protein to the chloroplast. 9 helical membrane-spanning segments follow: residues 98–118 (VGEV…AVAL), 123–143 (AFLW…MLGM), 152–172 (LKTA…QYSV), 187–209 (PSYY…SNIV), 217–237 (VALS…LTPL), 252–272 (MGLF…GALL), 278–298 (GLVQ…VAVL), 315–335 (LQVV…GYVL), and 376–396 (VPCA…AGIW).

Belongs to the bile acid:sodium symporter (BASS) (TC 2.A.28) family.

It is found in the membrane. It localises to the plastid. The protein localises to the chloroplast envelope. In terms of biological role, may function as sodium-coupled metabolite transporter across the chloroplast envelope. The protein is Probable sodium/metabolite cotransporter BASS1, chloroplastic (BASS1) of Oryza sativa subsp. japonica (Rice).